A 730-amino-acid chain; its full sequence is Polyribonucleotide nucleotidyltransferase (730 aa).

Positions 489 and 495 each coordinate Mg(2+). The 60-residue stretch at 556–615 (PKIDTIKVDVDKIKIVIGKGGETIDKIIEETGVKIDIDEDGNIAIYSSDQEAINRTKEII) folds into the KH domain. One can recognise an S1 motif domain in the interval 625 to 693 (GEIYEAEVVR…DKGRIDASMK (69 aa)). Residues 691 to 730 (SMKALLPRPPRSEKSNKEDHQSVRHHGSPKDDKGKEKYDK) are disordered. Positions 700–730 (PRSEKSNKEDHQSVRHHGSPKDDKGKEKYDK) are enriched in basic and acidic residues.

It belongs to the polyribonucleotide nucleotidyltransferase family. Mg(2+) is required as a cofactor.

It localises to the cytoplasm. The enzyme catalyses RNA(n+1) + phosphate = RNA(n) + a ribonucleoside 5'-diphosphate. In terms of biological role, involved in mRNA degradation. Catalyzes the phosphorolysis of single-stranded polyribonucleotides processively in the 3'- to 5'-direction. This Streptococcus mutans serotype c (strain ATCC 700610 / UA159) protein is Polyribonucleotide nucleotidyltransferase.